Here is a 785-residue protein sequence, read N- to C-terminus: Phenylalanine--tRNA ligase beta subunit (785 aa).

The tRNA-binding domain maps to 39–147 (FPIPRGVVFA…DALPPGTPLS (109 aa)). One can recognise a B5 domain in the interval 399–474 (KPPEAIPFRP…RIQGYETIPL (76 aa)). Positions 452, 458, 461, and 462 each coordinate Mg(2+). The FDX-ACB domain maps to 688 to 780 (SRHPAAFRDL…ALRARGFGLR (93 aa)).

The protein belongs to the phenylalanyl-tRNA synthetase beta subunit family. Type 1 subfamily. In terms of assembly, tetramer of two alpha and two beta subunits. Mg(2+) serves as cofactor.

It is found in the cytoplasm. The catalysed reaction is tRNA(Phe) + L-phenylalanine + ATP = L-phenylalanyl-tRNA(Phe) + AMP + diphosphate + H(+). The polypeptide is Phenylalanine--tRNA ligase beta subunit (pheT) (Thermus thermophilus (strain ATCC 27634 / DSM 579 / HB8)).